The chain runs to 286 residues: 33 kDa chaperonin (286 aa).

Intrachain disulfides connect cysteine 233–cysteine 235 and cysteine 267–cysteine 270.

It belongs to the HSP33 family. Under oxidizing conditions two disulfide bonds are formed involving the reactive cysteines. Under reducing conditions zinc is bound to the reactive cysteines and the protein is inactive.

The protein resides in the cytoplasm. Redox regulated molecular chaperone. Protects both thermally unfolding and oxidatively damaged proteins from irreversible aggregation. Plays an important role in the bacterial defense system toward oxidative stress. This chain is 33 kDa chaperonin, found in Histophilus somni (strain 129Pt) (Haemophilus somnus).